Here is a 176-residue protein sequence, read N- to C-terminus: Pituitary adenylate cyclase-activating polypeptide (176 aa).

Residues 1–24 (MTMCSGARLALLVYGIIMHSSVYC) form the signal peptide. Residues 25-80 (SPAAAGLRFPGIRPEDEAYDEDGNPLQDFYDSDPPGVGGPASTLRDAYALYYPAEE) constitute a propeptide that is removed on maturation. An important for receptor binding region spans residues 150–158 (VKKYLAAVL). Position 158 is a leucine amide (Leu158). Lys169 bears the Lysine amide mark. A propeptide spanning residues 173 to 176 (IAYL) is cleaved from the precursor.

It belongs to the glucagon family.

It is found in the secreted. Its function is as follows. PACAP is a neuropeptide involved in diverse array of physiological processes through activating the PACAP subfamily of class B1 G protein-coupled receptors: VIP receptor 1 (VIPR1), VIP receptor 2 (VIPR2), and PACAP type I receptor (ADCYAP1R1). Exerts neuroprotective and general cytoprotective effects due to anti-apoptotic, anti-inflammatory, and antioxidant actions. Promotes neuron projection development through the RAPGEF2/Rap1/B-Raf/ERK pathway. In chromaffin cells, induces long-lasting increase of intracellular calcium concentrations and neuroendocrine secretion. Involved in the control of glucose homeostasis, induces insulin secretion by pancreatic beta cells. PACAP exists in two bioactive forms from proteolysis of the same precursor protein, PACAP27 and PACAP38, which differ by eleven amino acid residues in the C-terminus. In Sus scrofa (Pig), this protein is Pituitary adenylate cyclase-activating polypeptide (ADCYAP1).